Here is a 505-residue protein sequence, read N- to C-terminus: Prenylcysteine oxidase 1 (505 aa).

An N-terminal signal peptide occupies residues Met1–Gly27. Residues Asn196, Asn323, and Asn353 are each glycosylated (N-linked (GlcNAc...) asparagine).

It belongs to the prenylcysteine oxidase family. The cofactor is FAD.

The protein resides in the lysosome. It catalyses the reaction an S-polyprenyl-L-cysteine + O2 + H2O = a polyprenal + L-cysteine + H2O2. The catalysed reaction is S-(2E,6E)-farnesyl-L-cysteine + O2 + H2O = (2E,6E)-farnesal + L-cysteine + H2O2. It carries out the reaction [(2E,6E,10E)-geranylgeranyl]-L-cysteine + O2 + H2O = (2E,6E,10E)-geranylgeranial + L-cysteine + H2O2. Functionally, prenylcysteine oxidase that cleaves the thioether bond of prenyl-L-cysteines, such as farnesylcysteine and geranylgeranylcysteine. Only active against free prenylcysteines and not prenylcysteine residues within prenylated proteins or peptides. Involved in the final step in the degradation of prenylated proteins, by degrading prenylcysteines after the protein has been degraded. The chain is Prenylcysteine oxidase 1 from Pongo abelii (Sumatran orangutan).